The sequence spans 397 residues: Digeranylgeranylglycerophospholipid reductase 3 (397 aa).

Positions 16, 35, 46, 47, 49, 102, 126, 283, 295, and 296 each coordinate FAD. Lys-338 contributes to the a 2,3-bis-O-(geranylgeranyl)-sn-glycerol 1-phospholipid binding site.

The protein belongs to the geranylgeranyl reductase family. DGGGPL reductase subfamily. FAD is required as a cofactor.

It catalyses the reaction a 2,3-bis-O-phytanyl-sn-glycerol 1-phospholipid + 8 A = a 2,3-bis-O-(geranylgeranyl)-sn-glycerol 1-phospholipid + 8 AH2. The enzyme catalyses 2,3-bis-O-(phytanyl)-sn-glycerol 1-phosphate + 8 A = 2,3-bis-O-(geranylgeranyl)-sn-glycerol 1-phosphate + 8 AH2. The catalysed reaction is CDP-2,3-bis-O-(geranylgeranyl)-sn-glycerol + 8 AH2 = CDP-2,3-bis-O-(phytanyl)-sn-glycerol + 8 A. It carries out the reaction archaetidylserine + 8 AH2 = 2,3-bis-O-phytanyl-sn-glycero-3-phospho-L-serine + 8 A. It participates in membrane lipid metabolism; glycerophospholipid metabolism. Is involved in the reduction of 2,3-digeranylgeranylglycerophospholipids (unsaturated archaeols) into 2,3-diphytanylglycerophospholipids (saturated archaeols) in the biosynthesis of archaeal membrane lipids. Catalyzes the formation of archaetidic acid (2,3-di-O-phytanyl-sn-glyceryl phosphate) from 2,3-di-O-geranylgeranylglyceryl phosphate (DGGGP) via the hydrogenation of each double bond of the isoprenoid chains. Is also probably able to reduce double bonds of geranyl groups in CDP-2,3-bis-O-(geranylgeranyl)-sn-glycerol and archaetidylserine, thus acting at various stages in the biosynthesis of archaeal membrane lipids. This chain is Digeranylgeranylglycerophospholipid reductase 3, found in Methanosphaera stadtmanae (strain ATCC 43021 / DSM 3091 / JCM 11832 / MCB-3).